Consider the following 186-residue polypeptide: Intraflagellar transport protein 27 homolog (186 aa).

GTP contacts are provided by residues 12–19 (GDPAVGKT), 64–68 (DSAGK), and 123–126 (NKTD).

The protein belongs to the small GTPase superfamily. Rab family. In terms of assembly, component of the IFT complex B, at least composed of IFT20, IFT25, IFT27, IFT52, IFT57, IFT74, IFT81, IFT88 and TRAF3IP1. Interacts with IFT25. Interacts with IFT70B. Interacts with RABL2/RABL2A; binding is equal in the presence of GTP or GDP. Interacts with ARL6; recognizes and binds with the GTP-free form of ARL6.

Its subcellular location is the cell projection. It localises to the cilium. The protein localises to the cytoplasm. The protein resides in the flagellum. Its function is as follows. Small GTPase-like component of the intraflagellar transport (IFT) complex B that promotes the exit of the BBSome complex from cilia via its interaction with ARL6. Not involved in entry of the BBSome complex into cilium. Prevents aggregation of GTP-free ARL6. Required for hedgehog signaling. Forms a subcomplex within the IFT complex B with IFT25. Its role in intraflagellar transport is mainly seen in tissues rich in ciliated cells such as kidney and testis. Essential for male fertility, spermiogenesis and sperm flagella formation. Plays a role in the early development of the kidney. May be involved in the regulation of ureteric bud initiation. In Homo sapiens (Human), this protein is Intraflagellar transport protein 27 homolog (IFT27).